Consider the following 280-residue polypeptide: Foldase protein PrsA 4 (280 aa).

The first 21 residues, 1–21 (MKRKKLVIGSILMGMTLSLSA), serve as a signal peptide directing secretion. A lipid anchor (N-palmitoyl cysteine) is attached at C22. Residue C22 is the site of S-diacylglycerol cysteine attachment. In terms of domain architecture, PpiC spans 132–222 (KPKLQVSHIL…FGYHIIKLTD (91 aa)).

Belongs to the PrsA family.

Its subcellular location is the cell membrane. The catalysed reaction is [protein]-peptidylproline (omega=180) = [protein]-peptidylproline (omega=0). Plays a major role in protein secretion by helping the post-translocational extracellular folding of several secreted proteins. In Bacillus cereus (strain ATCC 14579 / DSM 31 / CCUG 7414 / JCM 2152 / NBRC 15305 / NCIMB 9373 / NCTC 2599 / NRRL B-3711), this protein is Foldase protein PrsA 4 (prsA4).